Here is an 896-residue protein sequence, read N- to C-terminus: Phosphatidate phosphatase LPIN2 (896 aa).

The N-LIP stretch occupies residues 1-108; the sequence is MNYVGQLAGQ…LPAYLATSPI (108 aa). Serine 106 is subject to Phosphoserine. Positions 120-208 are disordered; the sequence is TPLVKSGGDE…SSNASLKEEE (89 aa). Positions 152–162 are enriched in basic residues; it reads VKKKKRRRKKY. The Nuclear localization signal signature appears at 153–158; it reads KKKKRR. Residues serine 174, serine 186, serine 187, serine 243, and serine 303 each carry the phosphoserine modification. Disordered regions lie at residues 370–405 and 420–459; these read AEAP…DIYL and FPKS…TECL. Residues 387-396 are compositionally biased toward basic residues; the sequence is KKKGVHKRSQ. The segment covering 426–448 has biased composition (polar residues); that stretch reads EPGSRQWPESDTLSGSQSPQSVG. Phosphoserine is present on serine 566. Residues 569–579 show a composition bias toward basic and acidic residues; it reads KQLPESKEGKS. The interval 569-636 is disordered; sequence KQLPESKEGK…LSHGSTTSYK (68 aa). Residues 604 to 617 are compositionally biased toward acidic residues; that stretch reads SSSDEGSQELEESI. The C-LIP stretch occupies residues 635-837; sequence YKKSLRLSSD…RIFTVNPKGE (203 aa). Residues 689 to 693 carry the DXDXT motif motif; it reads DIDGT. The LXXIL motif motif lies at 700–704; sequence LGQIL.

The protein belongs to the lipin family. Requires Mg(2+) as cofactor. In terms of tissue distribution, expressed in liver, lung, kidney, placenta, spleen, thymus, lymph node, prostate, testes, small intestine, and colon.

It localises to the nucleus. The protein resides in the cytoplasm. The protein localises to the cytosol. Its subcellular location is the endoplasmic reticulum membrane. The enzyme catalyses a 1,2-diacyl-sn-glycero-3-phosphate + H2O = a 1,2-diacyl-sn-glycerol + phosphate. Inhibited by N-ethylmaleimide. Functionally, acts as a magnesium-dependent phosphatidate phosphatase enzyme which catalyzes the conversion of phosphatidic acid to diacylglycerol during triglyceride, phosphatidylcholine and phosphatidylethanolamine biosynthesis in the endoplasmic reticulum membrane. Plays important roles in controlling the metabolism of fatty acids at different levels. Also acts as a nuclear transcriptional coactivator for PPARGC1A to modulate lipid metabolism. In Homo sapiens (Human), this protein is Phosphatidate phosphatase LPIN2.